The following is a 272-amino-acid chain: Carbonic anhydrase (272 aa).

The Zn(2+) site is built by C39, H98, and C101.

Belongs to the beta-class carbonic anhydrase family. A hexamer formed by a trimer of dimers. Purified from carboxysomes with the both RuBisCO subunits and the full-length form of CcmM, probably interacts with the N-terminus of CcmM. Zn(2+) serves as cofactor.

The protein localises to the carboxysome. It catalyses the reaction hydrogencarbonate + H(+) = CO2 + H2O. Functionally, reversible hydration of carbon dioxide. Essential to photosynthetic carbon dioxide fixation, supplies CO(2) to RuBisCO (ribulose bisphosphate carboxylase, rbcL-rbcS) in the carboxysome. Loss of activity results in limitation of CO(2) availability to RuBisCO located in the cytoplasm. This Synechococcus elongatus (strain ATCC 33912 / PCC 7942 / FACHB-805) (Anacystis nidulans R2) protein is Carbonic anhydrase.